We begin with the raw amino-acid sequence, 70 residues long: Large ribosomal subunit protein bL31 (70 aa).

Residues Cys-16, Cys-18, Cys-38, and Cys-41 each contribute to the Zn(2+) site.

It belongs to the bacterial ribosomal protein bL31 family. Type A subfamily. Part of the 50S ribosomal subunit. Zn(2+) serves as cofactor.

Functionally, binds the 23S rRNA. In Bifidobacterium adolescentis (strain ATCC 15703 / DSM 20083 / NCTC 11814 / E194a), this protein is Large ribosomal subunit protein bL31.